A 209-amino-acid chain; its full sequence is MGDTMQQRLTQDLTQFLASLPEDDRIKAINEIRMAIHQVSPFREEPVDCVLWVKNSQLMPNDYNPNNVAPPEKKLLQKSIEIDGFTQPIVVTHTDKNAMEIVDGFHRHEIGKGSSSLKLRLKGYLPVTCLEGTRNQRIAATIRHNRARGRHQITAMSEIVRELSQLGWDDNKIGKELGMDSDEVLRLKQINGLQELFADRQYSRAWTVK.

This is an uncharacterized protein from Escherichia coli (strain K12).